The following is a 676-amino-acid chain: GRB2-associated-binding protein 2 (676 aa).

S2 is modified (phosphoserine). Residues 6–117 enclose the PH domain; sequence DVVCTGWLRK…WVQSICQICG (112 aa). Positions 127–178 are disordered; it reads SLRNVSSAGHGPRSSPAELSSSSQHLLRERKSSAPSHSSQPTLFTFEPPVSN. Residues S133, S140, S141, S148, S149, S159, S164, S210, S218, S223, and S264 each carry the phosphoserine modification. Residues 140-149 show a composition bias toward low complexity; the sequence is SSPAELSSSS. Positions 159–169 are enriched in polar residues; the sequence is SAPSHSSQPTL. A Phosphothreonine modification is found at T265. Residue Y266 is modified to Phosphotyrosine. Residue T278 is modified to Phosphothreonine. Residues S281 and S285 each carry the phosphoserine modification. At T287 the chain carries Phosphothreonine. At Y293 the chain carries Phosphotyrosine. The residue at position 331 (T331) is a Phosphothreonine. A disordered region spans residues 341-430; the sequence is VATPGDSAIA…RSAESMSDGV (90 aa). The SH3-binding motif lies at 351–358; that stretch reads PPPRPPKP. At S368 the chain carries Phosphoserine. Residues T385 and T391 each carry the phosphothreonine modification. S405 carries the phosphoserine modification. T408 bears the Phosphothreonine mark. Phosphoserine is present on residues S422 and S425. Y452 bears the Phosphotyrosine mark. A Phosphoserine modification is found at S480. Positions 492–531 are disordered; sequence PSTTLPVHRGPSRGSEIQPPPVNRNLKPDRKAKPTPLDLR. The short motif at 510–519 is the SH3-binding element; sequence PPPVNRNLKP. S543 carries the phosphoserine modification. Polar residues-rich tracts occupy residues 556 to 577 and 589 to 611; these read FNSS…STDS and NPVS…STGS. Disordered stretches follow at residues 556–643 and 656–676; these read FNSS…KVDY and NTMQ…GAKL. Phosphoserine occurs at positions 622 and 623. Residue Y643 is modified to Phosphotyrosine. Polar residues predominate over residues 656–670; the sequence is NTMQEWTDVRQSSEP.

The protein belongs to the GAB family. Part of a complex composed of EEIG1, TNFRSF11A/RANK, PLCG2, GAB2, TEC and BTK; complex formation increases in the presence of TNFSF11/RANKL. Interacts with SHC1; may mediate interaction with receptors. Interacts with SYK. Interacts with PI-3 kinase. Interacts with GRB2 (via SH3 2 domain). Interacts (phosphorylated) with PTPN11. Interacts with TNFRSF11A (via cytoplasmic domain). Interacts (phosphorylated) with 14-3-3 family proteins SFN, YWHAB, YWHAE, YWHAG, YWHAH, YWHAQ and YWHAZ; prevents interaction with GRB2 and attenuates GAB2 signaling. Interacts with HCK. Post-translationally, phosphorylated on tyrosine residue(s) by the thrombopoietin receptor (TPOR), stem cell factor receptor (SCFR), and T-cell and B-cell antigen receptors, gp130, IL-2R and IL-3R. Phosphorylated upon stimulation of TNFRSF11A/RANK by TNFSF11/RANKL. Phosphorylated upon EGF stimulation. Phosphorylated on tyrosine residues by HCK upon IL6 signaling. In terms of processing, dephosphorylated by PTPN11.

The protein resides in the cytoplasm. The protein localises to the cell membrane. It is found in the membrane raft. Functionally, adapter protein which acts downstream of several membrane receptors including cytokine, antigen, hormone, cell matrix and growth factor receptors to regulate multiple signaling pathways. Regulates osteoclast differentiation mediating the TNFRSF11A/RANK signaling. In allergic response, it plays a role in mast cells activation and degranulation through PI-3-kinase regulation. Also involved in the regulation of cell proliferation and hematopoiesis. This Homo sapiens (Human) protein is GRB2-associated-binding protein 2 (GAB2).